Here is a 236-residue protein sequence, read N- to C-terminus: Rab-like protein 3 (236 aa).

Residues 1–236 are small GTPase-like; the sequence is MASLDRVKVL…GGTLKSLHYD (236 aa). Residues 16 to 21, 148 to 150, and 179 to 180 contribute to the GTP site; these read GVGKSS, KLD, and DC.

It belongs to the small GTPase superfamily. Rab family. As to quaternary structure, homodimer. Interacts with GPR89; the interaction stabilizes GPR89. Interacts with RAP1GDS1.

Its function is as follows. Required for KRAS signaling regulation and modulation of cell proliferation. Regulator of KRAS prenylation, and probably prenylation of other small GTPases. Required for lymphocyte development and function. Not required for myeloid cell development. This Bos taurus (Bovine) protein is Rab-like protein 3 (RABL3).